Consider the following 249-residue polypeptide: Dihydroneopterin 2',3'-cyclic phosphate phosphodiesterase (249 aa).

Residues 58–172 form the HD domain; that stretch reads LIEHTISVTK…VHYADEADSK (115 aa).

Homododecamer. It depends on Fe(2+) as a cofactor. Requires Zn(2+) as cofactor.

It catalyses the reaction 7,8-dihydroneopterin 2',3'-cyclic phosphate + H2O = 7,8-dihydroneopterin 3'-phosphate + H(+). The catalysed reaction is 7,8-dihydroneopterin 2',3'-cyclic phosphate + H2O = 7,8-dihydroneopterin 2'-phosphate + H(+). It functions in the pathway cofactor biosynthesis; 5,6,7,8-tetrahydromethanopterin biosynthesis. In terms of biological role, cyclic phosphodiesterase that hydrolyzes the cyclic phosphate of 7,8-dihydroneopterin 2',3'-cyclic phosphate (H2N-cP) and converts it to a mixture of 7,8-dihydroneopterin 2'-phosphate (H2N-2'P) and 7,8-dihydroneopterin 3'-phosphate (H2N-3'P). Is also able to utilize other phosphodiesters as substrates in vitro: hydrolysis of bis-pNPP and pNPPC produces nitrophenyl phosphate, and that of 2',3'-cAMP produces 3'-AMP. ATP, 3',5'-cAMP, GTP, 3',5'-cGMP, and 4',5'-cFMN cannot serve as substrates. This chain is Dihydroneopterin 2',3'-cyclic phosphate phosphodiesterase (mptB), found in Methanocaldococcus jannaschii (strain ATCC 43067 / DSM 2661 / JAL-1 / JCM 10045 / NBRC 100440) (Methanococcus jannaschii).